A 558-amino-acid chain; its full sequence is Armadillo repeat-containing X-linked protein 5 (558 aa).

2 stretches are compositionally biased toward basic and acidic residues: residues M1–A14 and K139–A156. Disordered stretches follow at residues M1–T34 and K139–S163. 4 ARM repeats span residues C300–P339, V422–K461, H463–F503, and S520–L558.

The protein belongs to the eutherian X-chromosome-specific Armcx family.

The protein is Armadillo repeat-containing X-linked protein 5 (ARMCX5) of Pongo abelii (Sumatran orangutan).